We begin with the raw amino-acid sequence, 1294 residues long: CLIP-associating protein 2 (1294 aa).

A disordered region spans residues Met-1 to Gly-61. 2 positions are modified to phosphoserine: Ser-8 and Ser-14. Gly residues predominate over residues Ser-47–Gly-61. A TOG 1 region spans residues Gly-60–Ser-311. 3 HEAT repeats span residues His-173–Thr-208, His-209–Thr-245, and Arg-250–Gly-287. The segment at Val-314 to Ser-368 is disordered. Phosphoserine is present on residues Ser-316, Ser-327, and Ser-330. The span at Ser-316–Pro-334 shows a compositional bias: low complexity. Composition is skewed to polar residues over residues Phe-335–Thr-346 and Ala-353–Arg-367. Phosphoserine is present on residues Ser-360, Ser-368, Ser-370, and Ser-407. The interval Glu-409 to Val-467 is disordered. A compositionally biased stretch (basic and acidic residues) spans Thr-411–Val-425. Residues Arg-444 to Ser-580 form an interaction with microtubules, MAPRE1 and MAPRE3 region. Low complexity predominate over residues Ser-453–Val-467. Residues Ser-455, Ser-459, Ser-463, Ser-478, and Ser-489 each carry the phosphoserine modification. The tract at residues Ala-488–Ser-557 is disordered. An SXIP motif 1; mediates interaction with MAPRE1 and targeting to microtubule plus ends motif is present at residues Ser-494–Pro-497. Ser-507 carries the phosphoserine modification. Positions Ser-517–Pro-520 match the SXIP motif 2; mediates interaction with MAPRE1 and targeting to microtubule plus ends motif. Ser-525, Ser-529, Ser-585, Ser-587, Ser-596, Ser-621, and Ser-627 each carry phosphoserine. The tract at residues Tyr-617–Ile-645 is disordered. Low complexity predominate over residues Ser-627 to Arg-641. The tract at residues Met-649–Asn-881 is TOG 2. HEAT repeat units follow at residues Arg-710–Ala-747 and Leu-772–Pro-809. Position 787 is a phosphothreonine (Thr-787). Positions Thr-872–Ser-1294 are interaction with RSN and localization to the Golgi and kinetochores. Disordered stretches follow at residues His-878–Asp-928 and Ser-952–Gln-995. Polar residues-rich tracts occupy residues Arg-880–Ser-892 and Ser-901–Pro-922. At Ser-892 the chain carries Phosphoserine. 4 positions are modified to phosphoserine: Ser-952, Ser-955, Ser-1013, and Ser-1029. A compositionally biased stretch (basic and acidic residues) spans Ser-955 to Gly-972. The tract at residues Arg-1017–Ser-1294 is required for cortical localization. HEAT repeat units follow at residues Leu-1054–Glu-1091, Glu-1098–Ala-1135, and Leu-1216–Asp-1253.

It belongs to the CLASP family. In terms of assembly, interacts with microtubules. Interacts with MAPRE1; probably required for targeting to the growing microtubule plus ends. Interacts with CLIP2, ERC1, MAPRE3, PHLDB2 and RSN. The interaction with ERC1 may be mediated by PHLDB2. Interacts with GCC2; recruits CLASP2 to Golgi membranes. Interacts with MACF1. Interacts with mtcl2 and MTCL1. In terms of processing, phosphorylated by GSK3B. Phosphorylation reduces MAPRE1 binding. Phosphorylation by GSK3B may negatively regulate binding to microtubule lattices in lamella. In terms of tissue distribution, brain-specific.

It localises to the cytoplasm. The protein localises to the cytoskeleton. The protein resides in the microtubule organizing center. It is found in the centrosome. Its subcellular location is the chromosome. It localises to the centromere. The protein localises to the kinetochore. The protein resides in the spindle. It is found in the golgi apparatus. Its subcellular location is the trans-Golgi network. It localises to the cell membrane. The protein localises to the cell projection. The protein resides in the ruffle membrane. It is found in the cell cortex. In terms of biological role, microtubule plus-end tracking protein that promotes the stabilization of dynamic microtubules. Involved in the nucleation of noncentrosomal microtubules originating from the trans-Golgi network (TGN). Required for the polarization of the cytoplasmic microtubule arrays in migrating cells towards the leading edge of the cell. May act at the cell cortex to enhance the frequency of rescue of depolymerizing microtubules by attaching their plus-ends to cortical platforms composed of ERC1 and PHLDB2. This cortical microtubule stabilizing activity is regulated at least in part by phosphatidylinositol 3-kinase signaling. Also performs a similar stabilizing function at the kinetochore which is essential for the bipolar alignment of chromosomes on the mitotic spindle. Acts as a mediator of ERBB2-dependent stabilization of microtubules at the cell cortex. This Homo sapiens (Human) protein is CLIP-associating protein 2 (CLASP2).